The primary structure comprises 141 residues: Hemoglobin subunit alpha (141 aa).

One can recognise a Globin domain in the interval 1-141; that stretch reads VLSDEDKTNV…VSTVLTSKYR (141 aa). Phosphoserine is present on serine 3. Lysine 7 is subject to N6-succinyllysine. At threonine 8 the chain carries Phosphothreonine. N6-succinyllysine is present on lysine 11. N6-acetyllysine; alternate is present on lysine 16. At lysine 16 the chain carries N6-succinyllysine; alternate. Residue tyrosine 24 is modified to Phosphotyrosine. A Phosphoserine modification is found at serine 35. Lysine 40 bears the N6-succinyllysine mark. Serine 49 bears the Phosphoserine mark. Histidine 58 contributes to the O2 binding site. Histidine 87 is a binding site for heme b. Position 102 is a phosphoserine (serine 102). A Phosphothreonine modification is found at threonine 108. Serine 124 and serine 131 each carry phosphoserine. Threonine 134 and threonine 137 each carry phosphothreonine. Position 138 is a phosphoserine (serine 138).

This sequence belongs to the globin family. In terms of assembly, heterotetramer of two alpha chains and two beta chains. Red blood cells.

In terms of biological role, involved in oxygen transport from the lung to the various peripheral tissues. Its function is as follows. Hemopressin acts as an antagonist peptide of the cannabinoid receptor CNR1. Hemopressin-binding efficiently blocks cannabinoid receptor CNR1 and subsequent signaling. The chain is Hemoglobin subunit alpha (HBA) from Trichechus inunguis (Amazon manatee).